We begin with the raw amino-acid sequence, 237 residues long: 7-cyano-7-deazaguanine synthase (237 aa).

Residue 15–25 (LSGGMDSTVCA) coordinates ATP. Zn(2+) is bound by residues cysteine 197, cysteine 205, cysteine 208, and cysteine 211.

The protein belongs to the QueC family. Zn(2+) is required as a cofactor.

The catalysed reaction is 7-carboxy-7-deazaguanine + NH4(+) + ATP = 7-cyano-7-deazaguanine + ADP + phosphate + H2O + H(+). Its pathway is purine metabolism; 7-cyano-7-deazaguanine biosynthesis. In terms of biological role, catalyzes the ATP-dependent conversion of 7-carboxy-7-deazaguanine (CDG) to 7-cyano-7-deazaguanine (preQ(0)). This Koribacter versatilis (strain Ellin345) protein is 7-cyano-7-deazaguanine synthase.